We begin with the raw amino-acid sequence, 127 residues long: Large ribosomal subunit protein eL8 (127 aa).

The protein belongs to the eukaryotic ribosomal protein eL8 family. In terms of assembly, part of the 50S ribosomal subunit. Probably part of the RNase P complex.

The protein resides in the cytoplasm. In terms of biological role, multifunctional RNA-binding protein that recognizes the K-turn motif in ribosomal RNA, the RNA component of RNase P, box H/ACA, box C/D and box C'/D' sRNAs. This is Large ribosomal subunit protein eL8 from Desulfurococcus amylolyticus (strain DSM 18924 / JCM 16383 / VKM B-2413 / 1221n) (Desulfurococcus kamchatkensis).